A 549-amino-acid chain; its full sequence is Arginine-containing cyclodipeptide synthase amaA (549 aa).

The short motif at 445–449 (DDRAE) is the Conserved DDXXE motif element.

The protein belongs to the arginine-containing cyclodipeptide synthase family.

The catalysed reaction is L-prolyl-tRNA(Pro) + L-arginyl-tRNA(Arg) = cyclo(L-arginyl-L-prolyl) + tRNA(Pro) + tRNA(Arg) + 2 H(+). It participates in secondary metabolite biosynthesis. Arginine-containing cyclodipeptide synthase; part of the cluster that mediates the biosynthesis of a highly modified cyclo-arginine-proline dipeptide (cRP). Within the pathway, amaA acts as the scaffold-generating enzyme and is responsible for formation of the cyclo-Arg-Pro diketopiperazine (cRW) from L-arginyl-tRNA(Arg) + L-prolyl-tRNA(Pro). Additional enzymes from the cluster then further modify the cyclo-Arg-Pro diketopiperazine (cRW) scaffold. The sequence is that of Arginine-containing cyclodipeptide synthase amaA from Apiospora montagnei (Sphaeria apiospora).